The chain runs to 335 residues: Zinc finger protein CO3 (335 aa).

Zn(2+)-binding residues include C15, C18, C38, and H43. Residues 15–57 form a B box-type; atypical zinc finger; sequence CDSCRSAPCAFYCLADSAALCATCDADVHSVNPLARRHRRVPM. The disordered stretch occupies residues 141–179; sequence AGEKEDASSSKDCSSSHGKSSEGSHEFAVPGEPVPERQG. Residues 268-310 form the CCT domain; the sequence is REARVHRYREKRKTRRFEKTIRYASRKAYAETRPRIKGRFAKR.

It belongs to the CONSTANS family.

It localises to the nucleus. Probable transcription factor involved in the regulation of flowering time under short day (SD) conditions. Functions as a repressor of flowering under SD conditions, independently of HD1, EHD1, MADS50 and MADS51. Controls flowering time under SD conditions by negatively regulating the expression of HD3A and FTL. This is Zinc finger protein CO3 from Oryza sativa subsp. japonica (Rice).